The sequence spans 620 residues: Chaperone protein HscA homolog (620 aa).

The protein belongs to the heat shock protein 70 family.

Chaperone involved in the maturation of iron-sulfur cluster-containing proteins. Has a low intrinsic ATPase activity which is markedly stimulated by HscB. This chain is Chaperone protein HscA homolog, found in Shewanella loihica (strain ATCC BAA-1088 / PV-4).